The chain runs to 76 residues: Conotoxin VnMEKL-012 (76 aa).

Residues Met-1 to Ala-18 form the signal peptide. Positions Leu-19–Ala-42 are excised as a propeptide. Intrachain disulfides connect Cys-49–Cys-65, Cys-56–Cys-70, and Cys-64–Cys-74.

Belongs to the conotoxin O2 superfamily. Expressed by the venom duct.

The protein localises to the secreted. The sequence is that of Conotoxin VnMEKL-012 from Conus ventricosus (Mediterranean cone).